The primary structure comprises 723 residues: Catalase-peroxidase (723 aa).

A cross-link (tryptophyl-tyrosyl-methioninium (Trp-Tyr) (with M-252)) is located at residues 98–226 (WHSAGSYRVG…LAAVMMGLIY (129 aa)). H99 acts as the Proton acceptor in catalysis. A cross-link (tryptophyl-tyrosyl-methioninium (Tyr-Met) (with W-98)) is located at residues 226-252 (YVNPEGVDGNPDPLKTAKDMRVTFARM). Residue H267 coordinates heme b.

It belongs to the peroxidase family. Peroxidase/catalase subfamily. Homodimer or homotetramer. It depends on heme b as a cofactor. Post-translationally, formation of the three residue Trp-Tyr-Met cross-link is important for the catalase, but not the peroxidase activity of the enzyme.

It carries out the reaction H2O2 + AH2 = A + 2 H2O. The catalysed reaction is 2 H2O2 = O2 + 2 H2O. In terms of biological role, bifunctional enzyme with both catalase and broad-spectrum peroxidase activity. The protein is Catalase-peroxidase of Vibrio vulnificus (strain YJ016).